Here is a 300-residue protein sequence, read N- to C-terminus: NADH-cytochrome b5 reductase 1 (300 aa).

A helical membrane pass occupies residues 8–28 (PLVVFATVATIIISFVTLYFF). Over residues 34–45 (SSTTSSSSSSSS) the composition is skewed to low complexity. The disordered stretch occupies residues 34–54 (SSTTSSSSSSSSKSKKGSPAL). In terms of domain architecture, FAD-binding FR-type spans 57 to 160 (DKFQKFPLIS…RGPKGFFTYT (104 aa)). FAD is bound by residues 140 to 155 (AEKQ…GPKG) and 166 to 198 (SLGL…KVHL).

This sequence belongs to the flavoprotein pyridine nucleotide cytochrome reductase family. In terms of assembly, monomer. Component of the 2-(3-amino-3-carboxypropyl)histidine synthase complex composed of DPH1, DPH2, DPH3 and a NADH-dependent reductase, predominantly CBR1. FAD serves as cofactor.

Its subcellular location is the mitochondrion outer membrane. The enzyme catalyses 2 Fe(III)-[cytochrome b5] + NADH = 2 Fe(II)-[cytochrome b5] + NAD(+) + H(+). The catalysed reaction is 2 Fe(3+)-[Dph3] + NADH = 2 Fe(2+)-[Dph3] + NAD(+) + H(+). It participates in protein modification; peptidyl-diphthamide biosynthesis. Functionally, NADH-dependent reductase for DPH3 and cytochrome b5. Required for the first step of diphthamide biosynthesis, a post-translational modification of histidine which occurs in elongation factor 2. DPH1 and DPH2 transfer a 3-amino-3-carboxypropyl (ACP) group from S-adenosyl-L-methionine (SAM) to a histidine residue, the reaction is assisted by a reduction system comprising DPH3 and a NADH-dependent reductase, predominantly CBR1. By reducing DPH3, also involved in the formation of the tRNA wobble base modification mcm5s 2U (5-methoxycarbonylmethyl-2-thiouridine), mediated by the elongator complex. The cytochrome b5/NADH cytochrome b5 reductase electron transfer system supports the catalytic activity of several sterol biosynthetic enzymes. In Lodderomyces elongisporus (strain ATCC 11503 / CBS 2605 / JCM 1781 / NBRC 1676 / NRRL YB-4239) (Yeast), this protein is NADH-cytochrome b5 reductase 1 (CBR1).